Consider the following 412-residue polypeptide: Multifunctional CCA protein (412 aa).

Residues G8 and R11 each coordinate ATP. CTP is bound by residues G8 and R11. Positions 21 and 23 each coordinate Mg(2+). ATP contacts are provided by R91, R137, and R140. Positions 91, 137, and 140 each coordinate CTP. Residues 226–327 (TGEHVLMVVE…VKVLERCDAL (102 aa)) enclose the HD domain.

Belongs to the tRNA nucleotidyltransferase/poly(A) polymerase family. Bacterial CCA-adding enzyme type 1 subfamily. Monomer. Can also form homodimers and oligomers. It depends on Mg(2+) as a cofactor. Requires Ni(2+) as cofactor.

The enzyme catalyses a tRNA precursor + 2 CTP + ATP = a tRNA with a 3' CCA end + 3 diphosphate. The catalysed reaction is a tRNA with a 3' CCA end + 2 CTP + ATP = a tRNA with a 3' CCACCA end + 3 diphosphate. Catalyzes the addition and repair of the essential 3'-terminal CCA sequence in tRNAs without using a nucleic acid template. Adds these three nucleotides in the order of C, C, and A to the tRNA nucleotide-73, using CTP and ATP as substrates and producing inorganic pyrophosphate. tRNA 3'-terminal CCA addition is required both for tRNA processing and repair. Also involved in tRNA surveillance by mediating tandem CCA addition to generate a CCACCA at the 3' terminus of unstable tRNAs. While stable tRNAs receive only 3'-terminal CCA, unstable tRNAs are marked with CCACCA and rapidly degraded. The sequence is that of Multifunctional CCA protein from Azoarcus sp. (strain BH72).